We begin with the raw amino-acid sequence, 402 residues long: Guanine nucleotide-binding protein subunit alpha-1 (402 aa).

Residues 1-12 show a composition bias toward polar residues; sequence MGCSASKPSEPS. The interval 1-70 is disordered; that stretch reads MGCSASKPSE…PEPQKPAEPA (70 aa). Residue glycine 2 is the site of N-myristoyl glycine attachment. Cysteine 3 is lipidated: S-palmitoyl cysteine. Positions 23–33 are enriched in basic and acidic residues; sequence KKVEQVPEPKP. Over residues 34 to 69 the composition is skewed to pro residues; that stretch reads EPQPQPEPQPQPEPPKPAEPAPAPAPAPEPQKPAEP. Positions 82 to 402 constitute a G-alpha domain; that stretch reads EAYGLLLCGA…FISDKYYQDA (321 aa). Residues 85 to 98 form a G1 motif region; it reads GLLLCGAGESGKTT. Positions 93, 94, 95, 96, 97, 98, 198, 223, 229, 251, 317, 318, 320, and 377 each coordinate GTP. Position 97 (threonine 97) interacts with Mg(2+). The G2 motif stretch occupies residues 221 to 229; it reads DVLRARIRS. Serine 229 is a binding site for Mg(2+). Positions 244–253 are G3 motif; the sequence is IRIFDVGGQK. Positions 313 to 320 are G4 motif; the sequence is FLVCNKFD. The G5 motif stretch occupies residues 375–380; the sequence is IVALNG.

Belongs to the G-alpha family. As to quaternary structure, g proteins are composed of 3 units; alpha, beta and gamma. The alpha chain contains the guanine nucleotide binding site. The cofactor is Mg(2+).

It localises to the cytoplasm. It is found in the perinuclear region. The protein localises to the endomembrane system. In terms of biological role, guanine nucleotide-binding proteins (G proteins) are involved as modulators or transducers in various transmembrane signaling systems. In Trichomonas vaginalis, this protein is Guanine nucleotide-binding protein subunit alpha-1 (GA1).